The following is a 272-amino-acid chain: Formamidopyrimidine-DNA glycosylase (272 aa).

The Schiff-base intermediate with DNA role is filled by Pro2. Glu3 serves as the catalytic Proton donor. Lys58 acts as the Proton donor; for beta-elimination activity in catalysis. Residues His91, Arg111, and Arg153 each coordinate DNA. The segment at 238–272 adopts an FPG-type zinc-finger fold; the sequence is AVYGRANKACVICSKPLKEIRQAQRSTVFCINCQS. Arg262 functions as the Proton donor; for delta-elimination activity in the catalytic mechanism.

The protein belongs to the FPG family. Monomer. Zn(2+) is required as a cofactor.

It carries out the reaction Hydrolysis of DNA containing ring-opened 7-methylguanine residues, releasing 2,6-diamino-4-hydroxy-5-(N-methyl)formamidopyrimidine.. The catalysed reaction is 2'-deoxyribonucleotide-(2'-deoxyribose 5'-phosphate)-2'-deoxyribonucleotide-DNA = a 3'-end 2'-deoxyribonucleotide-(2,3-dehydro-2,3-deoxyribose 5'-phosphate)-DNA + a 5'-end 5'-phospho-2'-deoxyribonucleoside-DNA + H(+). In terms of biological role, involved in base excision repair of DNA damaged by oxidation or by mutagenic agents. Acts as a DNA glycosylase that recognizes and removes damaged bases. Has a preference for oxidized purines, such as 7,8-dihydro-8-oxoguanine (8-oxoG). Has AP (apurinic/apyrimidinic) lyase activity and introduces nicks in the DNA strand. Cleaves the DNA backbone by beta-delta elimination to generate a single-strand break at the site of the removed base with both 3'- and 5'-phosphates. This chain is Formamidopyrimidine-DNA glycosylase, found in Marinomonas sp. (strain MWYL1).